The sequence spans 424 residues: Endoglucanase (424 aa).

The first 19 residues, 1–19 (MHRCMPLVAASMAALMLAG), serve as a signal peptide directing secretion. Cys20 carries N-palmitoyl cysteine lipidation. A lipid anchor (S-diacylglycerol cysteine) is attached at Cys20. A propeptide spanning residues 20–43 (CGGGDGDTTLSTAAATDTTTLKTA) is cleaved from the precursor. Glu247 acts as the Proton donor in catalysis. The Nucleophile role is filled by Glu359.

The protein belongs to the glycosyl hydrolase 5 (cellulase A) family.

Its subcellular location is the cell membrane. The enzyme catalyses Endohydrolysis of (1-&gt;4)-beta-D-glucosidic linkages in cellulose, lichenin and cereal beta-D-glucans.. This Ralstonia nicotianae (strain ATCC BAA-1114 / GMI1000) (Ralstonia solanacearum) protein is Endoglucanase (egl).